The sequence spans 163 residues: R-phycoerythrin alpha chain (163 aa).

C82 and C139 together coordinate (2R,3E)-phycoerythrobilin.

This sequence belongs to the phycobiliprotein family. In terms of assembly, heterodimer of an alpha and a beta chain. Contains two covalently linked bilin chromophores.

It localises to the plastid. It is found in the chloroplast thylakoid membrane. Light-harvesting photosynthetic bile pigment-protein from the phycobiliprotein complex. In Aglaothamnion neglectum (Red alga), this protein is R-phycoerythrin alpha chain (cpeA).